Here is an 830-residue protein sequence, read N- to C-terminus: Lon protease (830 aa).

Positions 1-28 (MTFDTNDDSIAKNSLAPYNQETEQQQEE) are disordered. Positions 50–245 (IPILPLRDVV…LVITHLTHEA (196 aa)) constitute a Lon N-terminal domain. 397 to 404 (GPPGVGKT) provides a ligand contact to ATP. The Lon proteolytic domain maps to 633-814 (TLPPGVALGL…DEVLPLAFSE (182 aa)). Catalysis depends on residues Ser720 and Lys763.

Belongs to the peptidase S16 family. As to quaternary structure, homohexamer. Organized in a ring with a central cavity.

The protein resides in the cytoplasm. The catalysed reaction is Hydrolysis of proteins in presence of ATP.. In terms of biological role, ATP-dependent serine protease that mediates the selective degradation of mutant and abnormal proteins as well as certain short-lived regulatory proteins. Required for cellular homeostasis and for survival from DNA damage and developmental changes induced by stress. Degrades polypeptides processively to yield small peptide fragments that are 5 to 10 amino acids long. Binds to DNA in a double-stranded, site-specific manner. This is Lon protease from Lawsonia intracellularis (strain PHE/MN1-00).